We begin with the raw amino-acid sequence, 824 residues long: Protein bicaudal D homolog 2 (824 aa).

Ser-2 carries the N-acetylserine modification. Positions 20–269 (EWLRAEVKRL…ELSHYMSIND (250 aa)) form a coiled coil. The tract at residues 25-398 (EVKRLSHELA…RLTENLSALR (374 aa)) is interacts with DYNLL1, DYNC1H1, DYNC1I2, DCTN1 and DCTN2. 3 positions are modified to phosphoserine: Ser-190, Ser-224, and Ser-318. The segment at 311 to 330 (LPLDNKTSTPKKEGLAPPSP) is disordered. Position 319 is a phosphothreonine (Thr-319). The interval 334-599 (SDLLSELNIS…LLAPEAGRAD (266 aa)) is interaction with KIF5A. Residues 338-537 (SELNISEIQK…VTFSEELANL (200 aa)) adopt a coiled-coil conformation. A phosphoserine mark is found at Ser-343 and Ser-395. Disordered regions lie at residues 398 to 425 (RRLQASKERQTALDNEKDRDSHEDGDYY), 559 to 622 (EGQG…DPRR), and 804 to 824 (EQTRRGRAKAAPKTKPATPSL). The span at 402–422 (ASKERQTALDNEKDRDSHEDG) shows a compositional bias: basic and acidic residues. Phosphoserine is present on residues Ser-568, Ser-574, and Ser-582. Residues 590–824 (LLAPEAGRAD…PKTKPATPSL (235 aa)) form an interaction with RANBP2 region. At Thr-602 the chain carries Phosphothreonine. The segment covering 604–618 (DSSPSPGSSLPSPLS) has biased composition (low complexity). Residues 666–808 (DKDKEALMEE…LELDHEQTRR (143 aa)) are a coiled coil. The tract at residues 666-814 (DKDKEALMEE…QTRRGRAKAA (149 aa)) is interacts with RAB6A. Thr-821 carries the post-translational modification Phosphothreonine. The residue at position 823 (Ser-823) is a Phosphoserine.

The protein belongs to the BicD family. As to quaternary structure, part of a tripartite complex with dynein and dynactin, acts an adapter linking the dynein motor complex and dynactin. Interacts with CPNE4 (via VWFA domain). Interacts with RAB6A. Interacts with NEK9. Interacts with DNAI1. Interacts with DYNC1H1. Interacts with RANBP2. Binds preferentially to tyrosinated microtubules than to detyrosinated microtubules. Interacts with DYNLL1, DYNC1I2; DCTN1, DCTN2 and KIF5A. Interacts with KIF1C. Phosphorylated by NEK9 in vitro. As to expression, ubiquitous.

The protein resides in the golgi apparatus. Its subcellular location is the cytoplasm. It localises to the cytoskeleton. It is found in the nucleus envelope. The protein localises to the nucleus. The protein resides in the nuclear pore complex. Its function is as follows. Acts as an adapter protein linking the dynein motor complex to various cargos and converts dynein from a non-processive to a highly processive motor in the presence of dynactin. Facilitates and stabilizes the interaction between dynein and dynactin and activates dynein processivity (the ability to move along a microtubule for a long distance without falling off the track). Facilitates the binding of RAB6A to the Golgi by stabilizing its GTP-bound form. Regulates coat complex coatomer protein I (COPI)-independent Golgi-endoplasmic reticulum transport via its interaction with RAB6A and recruitment of the dynein-dynactin motor complex. Contributes to nuclear and centrosomal positioning prior to mitotic entry through regulation of both dynein and kinesin-1. During G2 phase of the cell cycle, associates with RANBP2 at the nuclear pores and recruits dynein and dynactin to the nuclear envelope to ensure proper positioning of the nucleus relative to centrosomes prior to the onset of mitosis. This chain is Protein bicaudal D homolog 2, found in Homo sapiens (Human).